Consider the following 605-residue polypeptide: Probable potassium transport system protein Kup 1 (605 aa).

Helical transmembrane passes span 16–36 (ALGLVFGDIGTSPIYTLTVIF), 46–66 (VFGILSLVFWTMTILVTMEYA), 97–117 (VAFAGFLSFVGVSLLLGDGVI), 138–158 (GLSTGTLVAIAAAIAIGLFSV), 166–186 (VAGAFGPIMAVWFSTLAVTGV), 212–232 (GLAGYFVLSEVILCSTGGEAL), 248–268 (WYFVFMALYLNYLGQGVFAIT), 287–307 (LYIPFLILTIMATIIASQSII), 339–359 (IYLGAVNWSLMVAVILVMLLF), 368–388 (AYGMAVTGSMTITGIMMIIVF), 397–417 (ALVALVITLIDAAYLLSTFSK), and 418–438 (IPHGAYWSLILASIPFVTIII).

Belongs to the HAK/KUP transporter (TC 2.A.72) family.

Its subcellular location is the cell inner membrane. It carries out the reaction K(+)(in) + H(+)(in) = K(+)(out) + H(+)(out). Its function is as follows. Transport of potassium into the cell. Likely operates as a K(+):H(+) symporter. This Geobacter metallireducens (strain ATCC 53774 / DSM 7210 / GS-15) protein is Probable potassium transport system protein Kup 1.